The chain runs to 825 residues: Ent-copalyl diphosphate synthase 2, chloroplastic (825 aa).

The N-terminal 70 residues, 1–70 (MVLSSSCTTV…KGSSLTPIVR (70 aa)), are a transit peptide targeting the chloroplast. Lys-241 lines the substrate pocket. Residues 373–376 (EVDD) carry the DXDD motif motif. Position 459 (Lys-459) interacts with substrate.

This sequence belongs to the terpene synthase family. Tpsc subfamily. Mg(2+) serves as cofactor. Expressed in tassels.

Its subcellular location is the plastid. It localises to the chloroplast. It carries out the reaction (2E,6E,10E)-geranylgeranyl diphosphate = ent-copalyl diphosphate. The protein operates within plant hormone biosynthesis; gibberellin biosynthesis. Functionally, involved in gibberellin biosynthesis. Catalyzes the conversion of geranylgeranyl diphosphate to the gibberellin precursor ent-copalyl diphosphate (ent-CPP). Involved in the production of antifungal dolabralexin phytoalexins in response to biotic and abiotic stresses. In response to fungal infection and in associtation with KSL4, is involved in the production dolabradiene, a type of antifungal phytoalexin. This chain is Ent-copalyl diphosphate synthase 2, chloroplastic, found in Zea mays (Maize).